Here is a 440-residue protein sequence, read N- to C-terminus: Armadillo-like helical domain containing protein 1 (440 aa).

The protein is Armadillo-like helical domain containing protein 1 of Homo sapiens (Human).